The following is a 382-amino-acid chain: 1-deoxy-D-xylulose 5-phosphate reductoisomerase (382 aa).

Residues T11, G12, S13, I14, and N123 each coordinate NADPH. K124 serves as a coordination point for 1-deoxy-D-xylulose 5-phosphate. NADPH is bound at residue E125. Residue D149 coordinates Mn(2+). Residues S150, E151, S173, and H196 each contribute to the 1-deoxy-D-xylulose 5-phosphate site. E151 contacts Mn(2+). G202 lines the NADPH pocket. 1-deoxy-D-xylulose 5-phosphate is bound by residues S209, N214, K215, and E218. E218 is a Mn(2+) binding site.

This sequence belongs to the DXR family. Mg(2+) serves as cofactor. The cofactor is Mn(2+).

It carries out the reaction 2-C-methyl-D-erythritol 4-phosphate + NADP(+) = 1-deoxy-D-xylulose 5-phosphate + NADPH + H(+). It participates in isoprenoid biosynthesis; isopentenyl diphosphate biosynthesis via DXP pathway; isopentenyl diphosphate from 1-deoxy-D-xylulose 5-phosphate: step 1/6. Catalyzes the NADPH-dependent rearrangement and reduction of 1-deoxy-D-xylulose-5-phosphate (DXP) to 2-C-methyl-D-erythritol 4-phosphate (MEP). The sequence is that of 1-deoxy-D-xylulose 5-phosphate reductoisomerase from Phocaeicola vulgatus (strain ATCC 8482 / DSM 1447 / JCM 5826 / CCUG 4940 / NBRC 14291 / NCTC 11154) (Bacteroides vulgatus).